Reading from the N-terminus, the 322-residue chain is Replication factor C small subunit (322 aa).

An ATP-binding site is contributed by 50 to 57 (GPAGTGKT).

It belongs to the activator 1 small subunits family. RfcS subfamily. In terms of assembly, heteromultimer composed of small subunits (RfcS) and large subunits (RfcL).

In terms of biological role, part of the RFC clamp loader complex which loads the PCNA sliding clamp onto DNA. This Halobacterium salinarum (strain ATCC 700922 / JCM 11081 / NRC-1) (Halobacterium halobium) protein is Replication factor C small subunit.